Reading from the N-terminus, the 239-residue chain is Carboxy-S-adenosyl-L-methionine synthase (239 aa).

S-adenosyl-L-methionine is bound by residues Tyr-36, 61–63, 111–112, Asn-126, and Arg-193; these read GCS and DI.

This sequence belongs to the class I-like SAM-binding methyltransferase superfamily. Cx-SAM synthase family. In terms of assembly, homodimer.

The catalysed reaction is prephenate + S-adenosyl-L-methionine = carboxy-S-adenosyl-L-methionine + 3-phenylpyruvate + H2O. Its function is as follows. Catalyzes the conversion of S-adenosyl-L-methionine (SAM) to carboxy-S-adenosyl-L-methionine (Cx-SAM). The chain is Carboxy-S-adenosyl-L-methionine synthase from Nitratiruptor sp. (strain SB155-2).